Here is a 284-residue protein sequence, read N- to C-terminus: Putative ribosome biogenesis protein C306.07c (284 aa).

The disordered stretch occupies residues 264–284 (LKKSELRAQKRGSSGEGKGNK).

Belongs to the universal ribosomal protein uL1 family. Highly divergent. In terms of assembly, component of the 90S pre-ribosomes.

Its subcellular location is the nucleus. The protein resides in the nucleolus. In terms of biological role, involved in rRNA-processing and ribosome biosynthesis. The sequence is that of Putative ribosome biogenesis protein C306.07c from Schizosaccharomyces pombe (strain 972 / ATCC 24843) (Fission yeast).